Consider the following 203-residue polypeptide: LexA repressor (203 aa).

The H-T-H motif DNA-binding region spans 30-50; that stretch reads VREICQAVSLKSTSTVHGHLK. Catalysis depends on for autocatalytic cleavage activity residues serine 127 and lysine 164.

This sequence belongs to the peptidase S24 family. As to quaternary structure, homodimer.

It carries out the reaction Hydrolysis of Ala-|-Gly bond in repressor LexA.. Functionally, represses a number of genes involved in the response to DNA damage (SOS response), including recA and lexA. In the presence of single-stranded DNA, RecA interacts with LexA causing an autocatalytic cleavage which disrupts the DNA-binding part of LexA, leading to derepression of the SOS regulon and eventually DNA repair. The chain is LexA repressor from Clostridium perfringens (strain SM101 / Type A).